We begin with the raw amino-acid sequence, 74 residues long: Large ribosomal subunit protein uL29 (74 aa).

The protein belongs to the universal ribosomal protein uL29 family.

This is Large ribosomal subunit protein uL29 from Cyanothece sp. (strain PCC 7425 / ATCC 29141).